Reading from the N-terminus, the 471-residue chain is Mannose-1-phosphate guanylyltransferase (471 aa).

It belongs to the mannose-6-phosphate isomerase type 2 family.

The enzyme catalyses alpha-D-mannose 1-phosphate + GTP + H(+) = GDP-alpha-D-mannose + diphosphate. It functions in the pathway nucleotide-sugar biosynthesis; GDP-alpha-D-mannose biosynthesis; GDP-alpha-D-mannose from alpha-D-mannose 1-phosphate (GTP route): step 1/1. The protein operates within bacterial outer membrane biogenesis; LPS O-antigen biosynthesis. Its function is as follows. Involved in GDP-mannose biosynthesis which serves as the activated sugar nucleotide precursor for mannose residues in cell surface polysaccharides. This enzyme participates in synthesis of the LPS O9 antigen. The chain is Mannose-1-phosphate guanylyltransferase (manC) from Escherichia coli.